Consider the following 190-residue polypeptide: B3 domain-containing protein Os02g0764100 (190 aa).

The TF-B3 DNA-binding region spans 17-121 (FEKAVTPSDV…KLLFIDCKKN (105 aa)).

The protein localises to the nucleus. This chain is B3 domain-containing protein Os02g0764100, found in Oryza sativa subsp. japonica (Rice).